The chain runs to 1124 residues: Zinc finger E-box-binding homeobox 1 (1124 aa).

Disordered stretches follow at residues 1 to 124 and 142 to 163; these read MADG…NHDP and APEEDQRQGTPEASGHDENGTP. Residues 18 to 30 show a composition bias toward low complexity; sequence NNVTNYNTVVETN. Residues S31 and S33 each carry the phosphoserine modification. The segment covering 44–62 has biased composition (acidic residues); it reads EESVTDAADCEGVPEDDLP. The segment covering 72-91 has biased composition (basic and acidic residues); the sequence is SSEREGNAKNCWEDDRKEGQ. The segment at 170–193 adopts a C2H2-type 1 zinc-finger fold; the sequence is LTCPYCDRGYKRFTSLKEHIKYRH. Residues K186 and K195 each participate in a glycyl lysine isopeptide (Lys-Gly) (interchain with G-Cter in SUMO2) cross-link. 2 C2H2-type zinc fingers span residues 200 to 222 and 240 to 262; these read FSCSLCSYTFAYRTQLERHMTSH and FKCTECGKAFKYKHHLKEHLRIH. Residues 268 to 292 form a C2H2-type 4; atypical zinc finger; that stretch reads YECPNCKKRFSHSGSYSSHISSKKC. Residues 304 to 327 are disordered; the sequence is TGLKTSQCSSPSLSASPGSPTRPQ. Residue K307 forms a Glycyl lysine isopeptide (Lys-Gly) (interchain with G-Cter in SUMO2) linkage. A compositionally biased stretch (low complexity) spans 309–322; it reads SQCSSPSLSASPGS. Phosphoserine is present on residues S313 and S322. Residues K331 and K335 each participate in a glycyl lysine isopeptide (Lys-Gly) (interchain with G-Cter in SUMO2) cross-link. Residue K347 forms a Glycyl lysine isopeptide (Lys-Gly) (interchain with G-Cter in SUMO); alternate linkage. A Glycyl lysine isopeptide (Lys-Gly) (interchain with G-Cter in SUMO2); alternate cross-link involves residue K347. Residues K439, K493, K504, K515, K548, and K553 each participate in a glycyl lysine isopeptide (Lys-Gly) (interchain with G-Cter in SUMO2) cross-link. Disordered stretches follow at residues 551–586 and 636–714; these read DLKQPTQPPPLPAAEAEKPESSVSSATGDGNLSPSQ and QISV…SSSR. Residues 581 to 640 constitute a DNA-binding region (homeobox; atypical); the sequence is NLSPSQPPLKNLLSLLKAYYALNAQPSAEELSKIADSVNLPLDVVKKWFEKMQAGQISVQ. Phosphoserine is present on residues S642, S679, S686, S693, and S700. Polar residues predominate over residues 656 to 687; that stretch reads AKNNDQPQSANANEPQDSTVNLQSPLKMTNSP. Over residues 692-714 the composition is skewed to low complexity; that stretch reads GSTTNGSRSSTPSPSPLNLSSSR. T702 carries the post-translational modification Phosphothreonine. Phosphoserine is present on S704. A Glycyl lysine isopeptide (Lys-Gly) (interchain with G-Cter in SUMO); alternate cross-link involves residue K774. A Glycyl lysine isopeptide (Lys-Gly) (interchain with G-Cter in SUMO2); alternate cross-link involves residue K774. The interval 856-898 is disordered; sequence PPLKVIQPNGNQDERQDTSSEGVSNVEDQNDSDSTPPKKKMRK. A compositionally biased stretch (polar residues) spans 874–890; sequence SSEGVSNVEDQNDSDST. 2 C2H2-type zinc fingers span residues 904–926 and 932–954; these read YACDLCDKIFQKSSSLLRHKYEH and HECGICKKAFKHKHHLIEHMRLH. Residues 960-981 form a C2H2-type 7; atypical zinc finger; it reads YQCDKCGKRFSHSGSYSQHMNH. A disordered region spans residues 989–1124; the sequence is EAEERDSTEQ…QVSEEKTNEA (136 aa). Composition is skewed to acidic residues over residues 1031–1052 and 1062–1084; these read EEDEDSEKEEEEEDKEMEELQE and DEEEEEEEEEVEEEEVEEAENEG. Residues 1085–1099 show a composition bias toward basic and acidic residues; sequence EEAKTEGLMKDDRAE. The span at 1100–1115 shows a compositional bias: polar residues; the sequence is SQASSLGQKVGESSEQ.

The protein belongs to the delta-EF1/ZFH-1 C2H2-type zinc-finger family. In terms of assembly, interacts (via N-terminus) with SMARCA4/BRG1. In terms of processing, ubiquitinated, leading to degradation in a proteasome-dependent manner. Deubiquitinated by USP51, leading to stabilization. As to expression, colocalizes with SMARCA4/BRG1 in E-cadherin-negative cells from established lines, and stroma of normal colon as well as in de-differentiated epithelial cells at the invasion front of colorectal carcinomas (at protein level). Expressed in heart and skeletal muscle, but not in liver, spleen, or pancreas.

It localises to the nucleus. Acts as a transcriptional repressor. Inhibits interleukin-2 (IL-2) gene expression. Enhances or represses the promoter activity of the ATP1A1 gene depending on the quantity of cDNA and on the cell type. Represses E-cadherin promoter and induces an epithelial-mesenchymal transition (EMT) by recruiting SMARCA4/BRG1. Represses BCL6 transcription in the presence of the corepressor CTBP1. Positively regulates neuronal differentiation. Represses RCOR1 transcription activation during neurogenesis. Represses transcription by binding to the E box (5'-CANNTG-3'). In the absence of TGFB1, acts as a repressor of COL1A2 transcription via binding to the E-box in the upstream enhancer region. This Homo sapiens (Human) protein is Zinc finger E-box-binding homeobox 1.